The primary structure comprises 372 residues: Glutamate 5-kinase (372 aa).

Lysine 14 serves as a coordination point for ATP. Serine 54, aspartate 141, and asparagine 153 together coordinate substrate. 173–174 (TD) is a binding site for ATP. Residues 280–358 (RGTLVLDDGA…DAIVGLLGYM (79 aa)) enclose the PUA domain.

It belongs to the glutamate 5-kinase family.

It localises to the cytoplasm. The catalysed reaction is L-glutamate + ATP = L-glutamyl 5-phosphate + ADP. The protein operates within amino-acid biosynthesis; L-proline biosynthesis; L-glutamate 5-semialdehyde from L-glutamate: step 1/2. Catalyzes the transfer of a phosphate group to glutamate to form L-glutamate 5-phosphate. This is Glutamate 5-kinase from Pseudomonas fluorescens (strain Pf0-1).